A 1981-amino-acid polypeptide reads, in one-letter code: Nonribosomal peptide synthetase rstn8 (1981 aa).

The adenylation stretch occupies residues 251–638; sequence SYAALEQESA…ELGEIEYQAS (388 aa). Residues 763-840 form the Carrier 1 domain; sequence HHAGQKYDEM…ELFHRSQKTP (78 aa). The residue at position 800 (Ser800) is an O-(pantetheine 4'-phosphoryl)serine. A condensation 1 region spans residues 883–1293; that stretch reads EDIYPCSPLQ…DASMGTILSQ (411 aa). One can recognise a Carrier 2 domain in the interval 1438–1514; it reads EPLLPLEATL…CLASTLNSRP (77 aa). O-(pantetheine 4'-phosphoryl)serine is present on Ser1475. The tract at residues 1586-1978 is condensation 1; the sequence is EEQIDLVSFA…TFAQSIERII (393 aa). Positions 1754–1774 are disordered; that stretch reads HHHHQHEGRQHHGASETNGNR.

Belongs to the NRP synthetase family. The cofactor is pantetheine 4'-phosphate.

It carries out the reaction 2 L-tryptophan = cyclo(L-Trp-L-Trp) + 2 H2O. The protein operates within alkaloid biosynthesis. Its function is as follows. Nonribosomal peptide synthetase; part of the gene cluster that mediates the biosynthesis of okaramine B, a prenylated indole alkaloid that possesses an unusual octacyclic ring system, including a four-membered azetidine ring and an eight-membered azocine ring, and that exhibits insecticidal activity against silkworm larvae. Within the pathway, okaA acts as a bimodular non-ribosomal peptide synthetase (NRPS) that condenses two tryptophan molecules into cyclo(L-Trp-L-Trp). Prenylation by the prenyltransferase okaC then leads to the formation of cyclo(N8-(alpha,alpha-dimethylallyl)-L-Trp-6a-(alpha,alpha-dime-thylallyl)-L-Trp). This is followed by indole 2,3-epoxidation by the FAD-dependent monooxygenase okaB to facilitate the formation of the hexahydropyrrolo[2,3-b]indole (HPI) moiety of okaramine C. The cytochrome P450 monooxygenase okaD then likely catalyzes formation of the eight-membered ring of okaramine A. The dioxygenase okaE further forms the unusual 2-dimethyl-3-methyl-azetidine ring to yield 12-deshydroxyl okaramine E, as well as the hydroxylation of 12-deshydroxyl okaramine E to produce okaramine E. The cytochrome P450 monoxygenase okaG converts 12-deshydroxyl okaramine E into 3-desmethyl okaramine B which is further methylated by the methyltransferase okaF into okaramine B. In a shunt pathway, okaG and okaF together are also able to convert okaramine E into okaramine D. Okaramine H is produced by nonenzymatic conversion from okaramine A. In Penicillium ochrochloron, this protein is Nonribosomal peptide synthetase rstn8.